An 84-amino-acid polypeptide reads, in one-letter code: MPAPTKRERQNRKRFERNRSVRTRLRNLSKKFYRALDAGDLESARSVRDEAQKAYDKAAGKGIIHRNKASRKLSRFDRALAGRG.

A disordered region spans residues 1 to 22; sequence MPAPTKRERQNRKRFERNRSVR. Over residues 9 to 22 the composition is skewed to basic residues; it reads RQNRKRFERNRSVR.

Belongs to the bacterial ribosomal protein bS20 family.

Functionally, binds directly to 16S ribosomal RNA. This Rubrobacter xylanophilus (strain DSM 9941 / JCM 11954 / NBRC 16129 / PRD-1) protein is Small ribosomal subunit protein bS20.